Reading from the N-terminus, the 443-residue chain is ATP-dependent protease ATPase subunit HslU (443 aa).

ATP is bound by residues V18, 60–65 (GVGKTE), D255, E321, and R393.

It belongs to the ClpX chaperone family. HslU subfamily. A double ring-shaped homohexamer of HslV is capped on each side by a ring-shaped HslU homohexamer. The assembly of the HslU/HslV complex is dependent on binding of ATP.

The protein resides in the cytoplasm. ATPase subunit of a proteasome-like degradation complex; this subunit has chaperone activity. The binding of ATP and its subsequent hydrolysis by HslU are essential for unfolding of protein substrates subsequently hydrolyzed by HslV. HslU recognizes the N-terminal part of its protein substrates and unfolds these before they are guided to HslV for hydrolysis. The polypeptide is ATP-dependent protease ATPase subunit HslU (Colwellia psychrerythraea (strain 34H / ATCC BAA-681) (Vibrio psychroerythus)).